The sequence spans 109 residues: COX assembly mitochondrial protein 2 (109 aa).

One can recognise a CHCH domain in the interval 10 to 54 (FHSCLDFINALDKCHQKEYYKRIFGLCNNEKDALNKCLKEASLNN). 2 consecutive short sequence motifs (cx9C motif) follow at residues 13 to 23 (CLDFINALDKC) and 36 to 46 (CNNEKDALNKC). Cystine bridges form between cysteine 13–cysteine 46 and cysteine 23–cysteine 36.

It belongs to the CMC family. Interacts with CMC1.

Its subcellular location is the mitochondrion inner membrane. It is found in the mitochondrion intermembrane space. Its function is as follows. Required for mitochondrial cytochrome c oxidase (COX) assembly and respiration. May be involved in copper trafficking and distribution to mitochondrial COX and SOD1. The polypeptide is COX assembly mitochondrial protein 2 (CMC2) (Saccharomyces cerevisiae (strain ATCC 204508 / S288c) (Baker's yeast)).